Consider the following 130-residue polypeptide: Protein ApaG (130 aa).

The 125-residue stretch at 3–127 (SAVTRGIEVT…FSLDVPEQRR (125 aa)) folds into the ApaG domain.

The chain is Protein ApaG from Brucella abortus (strain S19).